Reading from the N-terminus, the 267-residue chain is Glucosamine-6-phosphate deaminase (267 aa).

D72 functions as the Proton acceptor; for enolization step in the catalytic mechanism. D141 serves as the catalytic For ring-opening step. The active-site Proton acceptor; for ring-opening step is H143. The For ring-opening step role is filled by E148.

It belongs to the glucosamine/galactosamine-6-phosphate isomerase family. NagB subfamily.

The catalysed reaction is alpha-D-glucosamine 6-phosphate + H2O = beta-D-fructose 6-phosphate + NH4(+). The protein operates within amino-sugar metabolism; N-acetylneuraminate degradation; D-fructose 6-phosphate from N-acetylneuraminate: step 5/5. With respect to regulation, allosterically activated by N-acetylglucosamine 6-phosphate (GlcNAc6P). Functionally, catalyzes the reversible isomerization-deamination of glucosamine 6-phosphate (GlcN6P) to form fructose 6-phosphate (Fru6P) and ammonium ion. The protein is Glucosamine-6-phosphate deaminase of Borrelia hermsii (strain HS1 / DAH).